The sequence spans 295 residues: Acetylglutamate kinase (295 aa).

Substrate is bound by residues 66–67, arginine 88, and asparagine 193; that span reads GG.

This sequence belongs to the acetylglutamate kinase family. ArgB subfamily.

Its subcellular location is the cytoplasm. It catalyses the reaction N-acetyl-L-glutamate + ATP = N-acetyl-L-glutamyl 5-phosphate + ADP. The protein operates within amino-acid biosynthesis; L-arginine biosynthesis; N(2)-acetyl-L-ornithine from L-glutamate: step 2/4. In terms of biological role, catalyzes the ATP-dependent phosphorylation of N-acetyl-L-glutamate. The chain is Acetylglutamate kinase from Rhizobium johnstonii (strain DSM 114642 / LMG 32736 / 3841) (Rhizobium leguminosarum bv. viciae).